Consider the following 243-residue polypeptide: Probable transcriptional regulator ycf27 (243 aa).

The Response regulatory domain occupies 7 to 120 (KILVVDDEAS…ELEARIRSVL (114 aa)). Aspartate 56 is subject to 4-aspartylphosphate. Residues 76–94 (DVPIIMLTALGEVCDRITG) constitute a DNA-binding region (H-T-H motif). The segment at residues 135 to 236 (SGIISIGFLK…ARGTGYLFQR (102 aa)) is a DNA-binding region (ompR/PhoB-type).

Its subcellular location is the plastid. The protein resides in the chloroplast. Probable promoter-specific protein mediating the interaction between DNA and RNA polymerase. The protein is Probable transcriptional regulator ycf27 (ycf27) of Porphyra purpurea (Red seaweed).